The chain runs to 825 residues: Endochitinase A1 (825 aa).

An N-terminal signal peptide occupies residues 1–22 (MVSSKLSFVATAVAALAPLASA). Residues 29 to 338 (SNLAIYWGQG…DHMKDILLHC (310 aa)) form the GH18 domain. The active-site Proton donor is the Glu174. 3 disordered regions span residues 338-568 (CDPS…TTTA), 680-736 (PVTE…VSTS), and 750-792 (PLIL…YTQE). The segment covering 344 to 554 (VTSSSAVPSS…STDESSTTVG (211 aa)) has biased composition (low complexity). Asn559 is a glycosylation site (N-linked (GlcNAc...) asparagine). Residues 701-712 (EGSNPTQPSGAS) are compositionally biased toward polar residues. Asn717 is a glycosylation site (N-linked (GlcNAc...) asparagine). Residues 772–792 (PSGQNSGSSSHVPIPPSYTQE) are compositionally biased toward polar residues. The GPI-anchor amidated glycine moiety is linked to residue Gly800. Residues 801–825 (AASRVTGLGHGLVLTVLTLSAFFVL) constitute a propeptide, removed in mature form.

Belongs to the glycosyl hydrolase 18 family. Chitinase class III subfamily. O-mannosylated by pmt4.

Its subcellular location is the cell membrane. The protein resides in the secreted. It localises to the cell wall. The enzyme catalyses Random endo-hydrolysis of N-acetyl-beta-D-glucosaminide (1-&gt;4)-beta-linkages in chitin and chitodextrins.. Its activity is regulated as follows. The cyclic peptide natural product argifin acts as a specific inhibitor. Functionally, GPI-anchored chitinase involved in the degradation of chitin, a component of the cell walls of fungi and exoskeletal elements of some animals (including worms and arthropods). Required to reshape the cell wall at the sites where cell wall remodeling and/or cell wall maturation actively take place such as sites of conidia formation. This Aspergillus fumigatus (Neosartorya fumigata) protein is Endochitinase A1 (chiA1).